Reading from the N-terminus, the 364-residue chain is Protein-glutamate methylesterase/protein-glutamine glutaminase 3 (364 aa).

Residues 7–124 form the Response regulatory domain; sequence RVLIVDDSAS…THALLEASAR (118 aa). D58 carries the post-translational modification 4-aspartylphosphate. The region spanning 167 to 358 is the CheB-type methylesterase domain; that stretch reads PTTERLVCIG…REIMLWQDAK (192 aa). Residues S178, H204, and D300 contribute to the active site.

Belongs to the CheB family. Phosphorylated by CheA. Phosphorylation of the N-terminal regulatory domain activates the methylesterase activity.

The protein resides in the cytoplasm. The enzyme catalyses [protein]-L-glutamate 5-O-methyl ester + H2O = L-glutamyl-[protein] + methanol + H(+). It carries out the reaction L-glutaminyl-[protein] + H2O = L-glutamyl-[protein] + NH4(+). Involved in chemotaxis. Part of a chemotaxis signal transduction system that modulates chemotaxis in response to various stimuli. Catalyzes the demethylation of specific methylglutamate residues introduced into the chemoreceptors (methyl-accepting chemotaxis proteins or MCP) by CheR. Also mediates the irreversible deamidation of specific glutamine residues to glutamic acid. The chain is Protein-glutamate methylesterase/protein-glutamine glutaminase 3 from Rhodopseudomonas palustris (strain BisB18).